Reading from the N-terminus, the 182-residue chain is ATP synthase subunit delta (182 aa).

The protein belongs to the ATPase delta chain family. In terms of assembly, F-type ATPases have 2 components, F(1) - the catalytic core - and F(0) - the membrane proton channel. F(1) has five subunits: alpha(3), beta(3), gamma(1), delta(1), epsilon(1). F(0) has three main subunits: a(1), b(2) and c(10-14). The alpha and beta chains form an alternating ring which encloses part of the gamma chain. F(1) is attached to F(0) by a central stalk formed by the gamma and epsilon chains, while a peripheral stalk is formed by the delta and b chains.

Its subcellular location is the cell membrane. Its function is as follows. F(1)F(0) ATP synthase produces ATP from ADP in the presence of a proton or sodium gradient. F-type ATPases consist of two structural domains, F(1) containing the extramembraneous catalytic core and F(0) containing the membrane proton channel, linked together by a central stalk and a peripheral stalk. During catalysis, ATP synthesis in the catalytic domain of F(1) is coupled via a rotary mechanism of the central stalk subunits to proton translocation. This protein is part of the stalk that links CF(0) to CF(1). It either transmits conformational changes from CF(0) to CF(1) or is implicated in proton conduction. The protein is ATP synthase subunit delta of Syntrophomonas wolfei subsp. wolfei (strain DSM 2245B / Goettingen).